The chain runs to 77 residues: Putative defensin-like protein 118 (77 aa).

The N-terminal stretch at 1 to 25 (MSKSTILAIFMIVLVLGKVTKETQG) is a signal peptide. Cystine bridges form between Cys-29/Cys-75, Cys-39/Cys-58, Cys-44/Cys-69, and Cys-48/Cys-71.

This sequence belongs to the DEFL family.

It is found in the secreted. The protein is Putative defensin-like protein 118 (LCR52) of Arabidopsis thaliana (Mouse-ear cress).